Reading from the N-terminus, the 182-residue chain is ATP-dependent protease subunit HslV (182 aa).

The active site involves Thr-10. Na(+) contacts are provided by Ala-166, Cys-169, and Ser-172.

Belongs to the peptidase T1B family. HslV subfamily. In terms of assembly, a double ring-shaped homohexamer of HslV is capped on each side by a ring-shaped HslU homohexamer. The assembly of the HslU/HslV complex is dependent on binding of ATP.

The protein localises to the cytoplasm. It carries out the reaction ATP-dependent cleavage of peptide bonds with broad specificity.. Allosterically activated by HslU binding. Protease subunit of a proteasome-like degradation complex believed to be a general protein degrading machinery. In Rickettsia africae (strain ESF-5), this protein is ATP-dependent protease subunit HslV.